The primary structure comprises 160 residues: Cytochrome b6-f complex subunit 4 (160 aa).

Helical transmembrane passes span 36–56 (LLYV…ALAV), 95–115 (LLGV…PFIE), and 131–151 (TVFL…ALPL).

The protein belongs to the cytochrome b family. PetD subfamily. The 4 large subunits of the cytochrome b6-f complex are cytochrome b6, subunit IV (17 kDa polypeptide, PetD), cytochrome f and the Rieske protein, while the 4 small subunits are PetG, PetL, PetM and PetN. The complex functions as a dimer.

It localises to the cellular thylakoid membrane. In terms of biological role, component of the cytochrome b6-f complex, which mediates electron transfer between photosystem II (PSII) and photosystem I (PSI), cyclic electron flow around PSI, and state transitions. This Trichormus variabilis (strain ATCC 29413 / PCC 7937) (Anabaena variabilis) protein is Cytochrome b6-f complex subunit 4.